We begin with the raw amino-acid sequence, 293 residues long: uncharacterized protein (293 aa).

A disordered region spans residues M1 to G22. Residues L25 to V45 form a helical membrane-spanning segment. Residues G243–A265 form a disordered region. Polar residues predominate over residues Q248 to A265.

It localises to the membrane. This is an uncharacterized protein from Mycobacterium tuberculosis (strain CDC 1551 / Oshkosh).